The chain runs to 76 residues: Ovarian cancer-related protein 1 (76 aa).

The protein is Ovarian cancer-related protein 1 (OCR1) of Homo sapiens (Human).